A 211-amino-acid polypeptide reads, in one-letter code: ATP phosphoribosyltransferase (211 aa).

This sequence belongs to the ATP phosphoribosyltransferase family. Short subfamily. Heteromultimer composed of HisG and HisZ subunits.

It is found in the cytoplasm. It catalyses the reaction 1-(5-phospho-beta-D-ribosyl)-ATP + diphosphate = 5-phospho-alpha-D-ribose 1-diphosphate + ATP. The protein operates within amino-acid biosynthesis; L-histidine biosynthesis; L-histidine from 5-phospho-alpha-D-ribose 1-diphosphate: step 1/9. In terms of biological role, catalyzes the condensation of ATP and 5-phosphoribose 1-diphosphate to form N'-(5'-phosphoribosyl)-ATP (PR-ATP). Has a crucial role in the pathway because the rate of histidine biosynthesis seems to be controlled primarily by regulation of HisG enzymatic activity. This Bacillus cereus (strain ATCC 14579 / DSM 31 / CCUG 7414 / JCM 2152 / NBRC 15305 / NCIMB 9373 / NCTC 2599 / NRRL B-3711) protein is ATP phosphoribosyltransferase.